Reading from the N-terminus, the 52-residue chain is Large ribosomal subunit protein bL32c (52 aa).

This sequence belongs to the bacterial ribosomal protein bL32 family.

Its subcellular location is the plastid. It localises to the chloroplast. The sequence is that of Large ribosomal subunit protein bL32c from Aethionema grandiflorum (Persian stone-cress).